The following is a 323-amino-acid chain: RNA polymerase II holoenzyme cyclin-like subunit (323 aa).

The Cyclin N-terminal domain maps to D45–I176.

This sequence belongs to the cyclin family. Cyclin C subfamily. In terms of assembly, component of the SRB8-11 complex which consists of SRB8, SSN2/SRB9, SSN3/SRB10 and SSN8/SRB11. The SRB8-11 complex associates with the Mediator complex. The SSN3/SRB10 and SSN8/SRB11 kinase-cyclin pair also associate with the RNA polymerase II holoenzyme. Interacts with ASK10.

The protein localises to the nucleus. Its function is as follows. Component of the SRB8-11 complex. The SRB8-11 complex is a regulatory module of the Mediator complex which is itself involved in regulation of basal and activated RNA polymerase II-dependent transcription. The SRB8-11 complex may be involved in the transcriptional repression of a subset of genes regulated by Mediator. It may inhibit the association of the Mediator complex with RNA polymerase II to form the holoenzyme complex. The SRB8-11 complex phosphorylates the C-terminal domain (CTD) of the largest subunit of RNA polymerase II RPB1 at serines 2 and 5. The SSN3/SRB10 and SSN8/SRB11 kinase-cyclin pair may also positively and negatively regulate numerous transcriptional activators in response to changes in nutritional and physiological conditions. The chain is RNA polymerase II holoenzyme cyclin-like subunit (SSN8) from Saccharomyces cerevisiae (strain ATCC 204508 / S288c) (Baker's yeast).